Consider the following 178-residue polypeptide: Orotate phosphoribosyltransferase (178 aa).

5-phospho-alpha-D-ribose 1-diphosphate is bound by residues Arg92, Lys93, Lys96, and 118–126 (EDVITTGSS). The orotate site is built by Thr122 and Arg150.

Belongs to the purine/pyrimidine phosphoribosyltransferase family. PyrE subfamily. Homodimer. Mg(2+) serves as cofactor.

It catalyses the reaction orotidine 5'-phosphate + diphosphate = orotate + 5-phospho-alpha-D-ribose 1-diphosphate. The protein operates within pyrimidine metabolism; UMP biosynthesis via de novo pathway; UMP from orotate: step 1/2. Catalyzes the transfer of a ribosyl phosphate group from 5-phosphoribose 1-diphosphate to orotate, leading to the formation of orotidine monophosphate (OMP). This is Orotate phosphoribosyltransferase from Archaeoglobus fulgidus (strain ATCC 49558 / DSM 4304 / JCM 9628 / NBRC 100126 / VC-16).